The primary structure comprises 124 residues: Small ribosomal subunit protein uS13 (124 aa).

Positions 95–124 (GLPVRGQRTKTNARTRKGPKRTVAGKKKAR) are disordered.

Belongs to the universal ribosomal protein uS13 family. In terms of assembly, part of the 30S ribosomal subunit. Forms a loose heterodimer with protein S19. Forms two bridges to the 50S subunit in the 70S ribosome.

In terms of biological role, located at the top of the head of the 30S subunit, it contacts several helices of the 16S rRNA. In the 70S ribosome it contacts the 23S rRNA (bridge B1a) and protein L5 of the 50S subunit (bridge B1b), connecting the 2 subunits; these bridges are implicated in subunit movement. Contacts the tRNAs in the A and P-sites. The sequence is that of Small ribosomal subunit protein uS13 from Leifsonia xyli subsp. xyli (strain CTCB07).